A 100-amino-acid chain; its full sequence is Class II hydrophobin CU (100 aa).

The first 25 residues, 1–25 (MQFSIATIALFLSSAMAAPYSGNSN), serve as a signal peptide directing secretion. Intrachain disulfides connect C32–C82, C42–C72, C43–C55, and C83–C94.

This sequence belongs to the cerato-ulmin hydrophobin family. As to quaternary structure, homotetramer. Further self-assembles to form highly ordered films at water-air interfaces through intermolecular interactions.

The protein localises to the secreted. It is found in the cell wall. Aerial growth, conidiation, and dispersal of filamentous fungi in the environment rely upon a capability of their secreting small amphipathic proteins called hydrophobins (HPBs) with low sequence identity. Class I can self-assemble into an outermost layer of rodlet bundles on aerial cell surfaces, conferring cellular hydrophobicity that supports fungal growth, development and dispersal; whereas Class II form highly ordered films at water-air interfaces through intermolecular interactions but contribute nothing to the rodlet structure. CU is a class II hydrophobin that is implicated in the pathogenicity of this fungus on elm trees. Required for hydrophobicity and adherence of the cells and acts as a parasitic fitness factor by protecting infectious propagules from desiccation. Reduces the interfacial tension of both oil-water and air-water interfaces. In Ophiostoma ulmi (Dutch elm disease fungus), this protein is Class II hydrophobin CU.